The primary structure comprises 443 residues: UDP-N-acetylmuramate--L-alanine ligase (443 aa).

110–116 contacts ATP; the sequence is GAHGKTS.

The protein belongs to the MurCDEF family.

It localises to the cytoplasm. The catalysed reaction is UDP-N-acetyl-alpha-D-muramate + L-alanine + ATP = UDP-N-acetyl-alpha-D-muramoyl-L-alanine + ADP + phosphate + H(+). It participates in cell wall biogenesis; peptidoglycan biosynthesis. In terms of biological role, cell wall formation. The sequence is that of UDP-N-acetylmuramate--L-alanine ligase from Streptococcus equi subsp. equi (strain 4047).